The following is a 241-amino-acid chain: Nuclear receptor-interacting protein 3 (241 aa).

The polypeptide is Nuclear receptor-interacting protein 3 (NRIP3) (Homo sapiens (Human)).